The following is a 180-amino-acid chain: UPF0227 protein VV2369 (180 aa).

The protein belongs to the UPF0227 family.

The polypeptide is UPF0227 protein VV2369 (Vibrio vulnificus (strain YJ016)).